A 580-amino-acid polypeptide reads, in one-letter code: Glutamine--tRNA ligase (580 aa).

Positions 41-51 (PEPNGYLHIGH) match the 'HIGH' region motif. Residues 42–44 (EPN) and 48–54 (HIGHAKA) each bind ATP. L-glutamine contacts are provided by Asp-74 and Tyr-218. ATP is bound by residues Thr-237, 285–286 (RL), and 293–295 (MSK). The short motif at 292–296 (VMSKR) is the 'KMSKS' region element.

Belongs to the class-I aminoacyl-tRNA synthetase family. As to quaternary structure, monomer.

The protein resides in the cytoplasm. It carries out the reaction tRNA(Gln) + L-glutamine + ATP = L-glutaminyl-tRNA(Gln) + AMP + diphosphate. In Xylella fastidiosa (strain 9a5c), this protein is Glutamine--tRNA ligase.